Consider the following 210-residue polypeptide: Dephospho-CoA kinase (210 aa).

In terms of domain architecture, DPCK spans 18–210 (RIGITGGIAS…LSYPQVEVLL (193 aa)). An ATP-binding site is contributed by 26 to 31 (ASGKTS).

This sequence belongs to the CoaE family.

It localises to the cytoplasm. It carries out the reaction 3'-dephospho-CoA + ATP = ADP + CoA + H(+). It participates in cofactor biosynthesis; coenzyme A biosynthesis; CoA from (R)-pantothenate: step 5/5. Functionally, catalyzes the phosphorylation of the 3'-hydroxyl group of dephosphocoenzyme A to form coenzyme A. This Prochlorococcus marinus (strain SARG / CCMP1375 / SS120) protein is Dephospho-CoA kinase.